Reading from the N-terminus, the 372-residue chain is Chaperone protein DnaJ (372 aa).

The J domain occupies 5 to 69; that stretch reads DYYEVLGLSK…QKKAQYDQFG (65 aa). A CR-type zinc finger spans residues 129-211; it reads GAEKEISVKK…CGGTGRKVKT (83 aa). The Zn(2+) site is built by C142, C145, C159, C162, C185, C188, C199, and C202. CXXCXGXG motif repeat units lie at residues 142 to 149, 159 to 166, 185 to 192, and 199 to 206; these read CDTCDGSG, CSTCGGRG, CPDCGGTG, and CSDCGGTG.

It belongs to the DnaJ family. Homodimer. Zn(2+) is required as a cofactor.

The protein localises to the cytoplasm. In terms of biological role, participates actively in the response to hyperosmotic and heat shock by preventing the aggregation of stress-denatured proteins and by disaggregating proteins, also in an autonomous, DnaK-independent fashion. Unfolded proteins bind initially to DnaJ; upon interaction with the DnaJ-bound protein, DnaK hydrolyzes its bound ATP, resulting in the formation of a stable complex. GrpE releases ADP from DnaK; ATP binding to DnaK triggers the release of the substrate protein, thus completing the reaction cycle. Several rounds of ATP-dependent interactions between DnaJ, DnaK and GrpE are required for fully efficient folding. Also involved, together with DnaK and GrpE, in the DNA replication of plasmids through activation of initiation proteins. The polypeptide is Chaperone protein DnaJ (Macrococcus caseolyticus (strain JCSC5402) (Macrococcoides caseolyticum)).